Reading from the N-terminus, the 511-residue chain is Cytochrome P450 714C3 (511 aa).

Residues 1 to 6 are Lumenal-facing; sequence MEKLLA. Residues 7–27 traverse the membrane as a helical; Signal-anchor for type III membrane protein segment; that stretch reads LIVVLVILLSLALFYLCNILW. Residues 28–511 lie on the Cytoplasmic side of the membrane; the sequence is LRAVKIRKKL…GLPLMVTKLP (484 aa). Cys-458 contacts heme.

Belongs to the cytochrome P450 family. The cofactor is heme.

The protein localises to the membrane. In Oryza sativa subsp. japonica (Rice), this protein is Cytochrome P450 714C3 (CYP714C3).